The chain runs to 238 residues: Ras association domain-containing protein 3 (238 aa).

Ser-2 bears the N-acetylserine mark. A disordered region spans residues 26 to 48; the sequence is RAPQGKPRSGQQDVEKEKETHSY. Positions 38-48 are enriched in basic and acidic residues; the sequence is DVEKEKETHSY. A Ras-associating domain is found at 79–186; it reads YTGFIKVQME…TLSFVLREHE (108 aa). The SARAH domain occupies 187–234; that stretch reads IGEWEAFSLPELQNFLRILDKEEDEQLQNLKRRYTAYRQKLEEALREV.

Widely expressed.

The protein localises to the cytoplasm. Its subcellular location is the cytoskeleton. The polypeptide is Ras association domain-containing protein 3 (RASSF3) (Homo sapiens (Human)).